Reading from the N-terminus, the 230-residue chain is 2-C-methyl-D-erythritol 4-phosphate cytidylyltransferase (230 aa).

The protein belongs to the IspD/TarI cytidylyltransferase family. IspD subfamily.

The enzyme catalyses 2-C-methyl-D-erythritol 4-phosphate + CTP + H(+) = 4-CDP-2-C-methyl-D-erythritol + diphosphate. The protein operates within isoprenoid biosynthesis; isopentenyl diphosphate biosynthesis via DXP pathway; isopentenyl diphosphate from 1-deoxy-D-xylulose 5-phosphate: step 2/6. Functionally, catalyzes the formation of 4-diphosphocytidyl-2-C-methyl-D-erythritol from CTP and 2-C-methyl-D-erythritol 4-phosphate (MEP). In Synechocystis sp. (strain ATCC 27184 / PCC 6803 / Kazusa), this protein is 2-C-methyl-D-erythritol 4-phosphate cytidylyltransferase.